The chain runs to 387 residues: Putative protein FAM157C (387 aa).

Disordered stretches follow at residues 1–21 (MGPL…PLPK), 182–226 (TARP…GAEP), and 329–353 (RARD…TSSG).

It belongs to the FAM157 family.

This Homo sapiens (Human) protein is Putative protein FAM157C (FAM157C).